We begin with the raw amino-acid sequence, 93 residues long: Signal recognition particle 19 kDa protein (93 aa).

Belongs to the SRP19 family. As to quaternary structure, part of the signal recognition particle protein translocation system, which is composed of SRP and FtsY. Archaeal SRP consists of a 7S RNA molecule of 300 nucleotides and two protein subunits: SRP54 and SRP19.

Its subcellular location is the cytoplasm. Involved in targeting and insertion of nascent membrane proteins into the cytoplasmic membrane. Binds directly to 7S RNA and mediates binding of the 54 kDa subunit of the SRP. The protein is Signal recognition particle 19 kDa protein of Haloquadratum walsbyi (strain DSM 16790 / HBSQ001).